The chain runs to 294 residues: Eukaryotic translation initiation factor 3 subunit F (294 aa).

The region spanning 20-163 is the MPN domain; it reads VTVTAQALFQ…IDPSKNSGNC (144 aa).

Belongs to the eIF-3 subunit F family. Component of the eukaryotic translation initiation factor 3 (eIF-3) complex.

Its subcellular location is the cytoplasm. In terms of biological role, component of the eukaryotic translation initiation factor 3 (eIF-3) complex, which is involved in protein synthesis of a specialized repertoire of mRNAs and, together with other initiation factors, stimulates binding of mRNA and methionyl-tRNAi to the 40S ribosome. The eIF-3 complex specifically targets and initiates translation of a subset of mRNAs involved in cell proliferation. The chain is Eukaryotic translation initiation factor 3 subunit F from Yarrowia lipolytica (strain CLIB 122 / E 150) (Yeast).